The sequence spans 339 residues: Zinc metalloprotease MJ0392 (339 aa).

A run of 2 helical transmembrane segments spans residues 10–30 and 33–53; these read IMGI…VIIG and IMNN…SVVL. Residue His-54 coordinates Zn(2+). Glu-55 is a catalytic residue. Position 58 (His-58) interacts with Zn(2+). 2 consecutive transmembrane segments (helical) span residues 96–116 and 125–145; these read IAGP…SQFF and LLYT…IPAF. Residue Asp-148 coordinates Zn(2+). The next 2 membrane-spanning stretches (helical) occupy residues 180–200 and 251–271; these read IMLL…SLFV and YFGY…IGNI. CBS domains are found at residues 226-281 and 281-335; these read MTPN…VRDY and YMEK…ELKE.

Belongs to the peptidase M50B family. In terms of assembly, monomer. Zn(2+) is required as a cofactor.

It is found in the cell membrane. Inhibited by 1,10-phenanthroline. Its function is as follows. A site-2 regulated intramembrane protease (S2P) that cleaves type-2 transmembrane proteins within their membrane-spanning domains; its endogenous substrate is unknown. Regulated intramembrane proteolysis (RIP) occurs when an extracytoplasmic signal triggers a concerted proteolytic cascade to transmit information and elicit cellular responses. A membrane-spanning regulatory substrate protein is first cut extracytoplasmically (site-1 protease, S1P), then within the membrane itself (site-2 protease, S2P, this enzyme), while cytoplasmic proteases finish degrading the regulatory protein, liberating the effector protein. Possible signals, S1P and substrates are unknown in this organism. The chain is Zinc metalloprotease MJ0392 from Methanocaldococcus jannaschii (strain ATCC 43067 / DSM 2661 / JAL-1 / JCM 10045 / NBRC 100440) (Methanococcus jannaschii).